Reading from the N-terminus, the 454-residue chain is Phosphoglucosamine mutase (454 aa).

Catalysis depends on Ser104, which acts as the Phosphoserine intermediate. Mg(2+)-binding residues include Ser104, Asp247, Asp249, and Asp251. Ser104 carries the post-translational modification Phosphoserine.

The protein belongs to the phosphohexose mutase family. The cofactor is Mg(2+). In terms of processing, activated by phosphorylation.

The catalysed reaction is alpha-D-glucosamine 1-phosphate = D-glucosamine 6-phosphate. In terms of biological role, catalyzes the conversion of glucosamine-6-phosphate to glucosamine-1-phosphate. In Bifidobacterium animalis subsp. lactis (strain AD011), this protein is Phosphoglucosamine mutase.